A 221-amino-acid chain; its full sequence is 7-cyano-7-deazaguanine synthase (221 aa).

9–19 (YSGGMDSFTLL) contacts ATP. 4 residues coordinate Zn(2+): cysteine 185, cysteine 193, cysteine 196, and cysteine 199.

The protein belongs to the QueC family. The cofactor is Zn(2+).

The enzyme catalyses 7-carboxy-7-deazaguanine + NH4(+) + ATP = 7-cyano-7-deazaguanine + ADP + phosphate + H2O + H(+). The protein operates within purine metabolism; 7-cyano-7-deazaguanine biosynthesis. Catalyzes the ATP-dependent conversion of 7-carboxy-7-deazaguanine (CDG) to 7-cyano-7-deazaguanine (preQ(0)). This is 7-cyano-7-deazaguanine synthase from Marinobacter nauticus (strain ATCC 700491 / DSM 11845 / VT8) (Marinobacter aquaeolei).